The primary structure comprises 120 residues: Large ribosomal subunit protein bL19 (120 aa).

The protein belongs to the bacterial ribosomal protein bL19 family.

Functionally, this protein is located at the 30S-50S ribosomal subunit interface and may play a role in the structure and function of the aminoacyl-tRNA binding site. The sequence is that of Large ribosomal subunit protein bL19 from Crocosphaera subtropica (strain ATCC 51142 / BH68) (Cyanothece sp. (strain ATCC 51142)).